The sequence spans 143 residues: SsrA-binding protein (143 aa).

Belongs to the SmpB family.

It localises to the cytoplasm. Functionally, required for rescue of stalled ribosomes mediated by trans-translation. Binds to transfer-messenger RNA (tmRNA), required for stable association of tmRNA with ribosomes. tmRNA and SmpB together mimic tRNA shape, replacing the anticodon stem-loop with SmpB. tmRNA is encoded by the ssrA gene; the 2 termini fold to resemble tRNA(Ala) and it encodes a 'tag peptide', a short internal open reading frame. During trans-translation Ala-aminoacylated tmRNA acts like a tRNA, entering the A-site of stalled ribosomes, displacing the stalled mRNA. The ribosome then switches to translate the ORF on the tmRNA; the nascent peptide is terminated with the 'tag peptide' encoded by the tmRNA and targeted for degradation. The ribosome is freed to recommence translation, which seems to be the essential function of trans-translation. This is SsrA-binding protein from Deinococcus radiodurans (strain ATCC 13939 / DSM 20539 / JCM 16871 / CCUG 27074 / LMG 4051 / NBRC 15346 / NCIMB 9279 / VKM B-1422 / R1).